The sequence spans 227 residues: MSAPTFRLCPADIGLEVAFAGRSNAGKSSAINALTNQRQLARSSKTPGRTQMINFFNVGDADRRLVDLPGYGYAAVPLEMKKEWQVELEEYLVSRSSLAGLVLMSDIRHPLKFFDEQMLRWAKDGELPVHILLTKADKLKYGASKNALLNTRKRLKELGLNCSIQLFSALRKEGLDELAGVMGNWYEYQLDADKIIESSFALLEGDELEDAIEQDALQKDSSQQDSK.

The EngB-type G domain occupies 13–188 (IGLEVAFAGR…AGVMGNWYEY (176 aa)). Residues 21 to 28 (GRSNAGKS), 48 to 52 (GRTQM), 67 to 70 (DLPG), 134 to 137 (TKAD), and 167 to 169 (FSA) contribute to the GTP site. Residues serine 28 and threonine 50 each contribute to the Mg(2+) site.

It belongs to the TRAFAC class TrmE-Era-EngA-EngB-Septin-like GTPase superfamily. EngB GTPase family. Mg(2+) serves as cofactor.

Its function is as follows. Necessary for normal cell division and for the maintenance of normal septation. The protein is Probable GTP-binding protein EngB of Psychrobacter cryohalolentis (strain ATCC BAA-1226 / DSM 17306 / VKM B-2378 / K5).